The following is a 287-amino-acid chain: Cis-prenyltransferase 7, chloroplastic (287 aa).

Residues 1–34 (MLSLGFSLPPPSDNKLIITNNNQYNYRTNLANVC) constitute a chloroplast transit peptide. The active site involves Asp61.

Belongs to the UPP synthase family. Mg(2+) serves as cofactor. In terms of tissue distribution, expressed in leaf trichomes and stem trichomes.

It is found in the plastid. The protein resides in the chloroplast. Functionally, uses geranylgeranyl diphosphate to catalyze the cis-prenyl chain elongation and produce polyprenyl diphosphate with a chain of 35 carbons. This is Cis-prenyltransferase 7, chloroplastic from Solanum lycopersicum (Tomato).